The primary structure comprises 837 residues: MEPAPSEVRLAVREAIHALSSSEDGGHIFCTLESLKRYLGEMEPPALPREKEEFASAHFSPVLRCLASRLSPAWLELLPHGRLEELWASFFLEGPADQAFLVLMETIEGAAGPSFRLMKMARLLARFLREGRLAVLMEAQCRQQTQPGFILLRETLLGKVVALPDHLGNRLQQENLAEFFPQNYFRLLGEEVVRVLQAVVDSLQGGLDSSVSFVSQVLGKACVHGRQQEILGVLVPRLAALTQGSYLHQRVCWRLVEQVPDRAMEAVLTGLVEAALGPEVLSRLLGNLVVKNKKAQFVMTQKLLFLQSRLTTPMLQSLLGHLAMDSQRRPLLLQVLKELLETWGSSSAIRHTPLPQQRHVSKAVLICLAQLGEPELRDSRDELLASMMAGVKCRLDSSLPPVRRLGMIVAEVVSARIHPEGPPLKFQYEEDELSLELLALASPQPAGDGASEAGTSLVPATAEPPAETPAEIVDGGVPQAQLAGSDSDLDSDDEFVPYDMSGDRELKSSKAPAYVRDCVEALTTSEDIERWEAALRALEGLVYRSPTATREVSVELAKVLLHLEEKTCVVGFAGLRQRALVAVTVTDPAPVADYLTSQFYALNYSLRQRMDILDVLTLAAQELSRPGCLGRTPQPGSPSPNTPCLPEAAVSQPGSAVASDWRVVVEERIRSKTQRLSKGGPRQGPAGSPSRFNSVAGHFFFPLLQRFDRPLVTFDLLGEDQLVLGRLAHTLGALMCLAVNTTVAVAMGKALLEFVWALRFHIDAYVRQGLLSAVSSVLLSLPAARLLEDLMDELLEARSWLADVAEKDPDEDCRTLALRALLLLQRLKNRLLPPASP.

Methionine 1 carries the post-translational modification N-acetylmethionine. Hydroxyproline occurs at positions 374, 419, and 422. The tract at residues 444 to 472 (QPAGDGASEAGTSLVPATAEPPAETPAEI) is disordered. Residue serine 456 is modified to Phosphoserine. The segment covering 459 to 471 (PATAEPPAETPAE) has biased composition (low complexity). Serine 485 carries the phosphoserine; by CK2 modification. 2 positions are modified to phosphoserine: serine 487 and serine 491. Residues 627–651 (GCLGRTPQPGSPSPNTPCLPEAAVS) are disordered. 2 positions are modified to phosphoserine: serine 688 and serine 836.

This sequence belongs to the TEL2 family. As to quaternary structure, component of the TTT complex composed of TELO2, TTI1 and TTI2. Interacts with ATM, ATR, MTOR, PRKDC, RUVBL2, TTI1, TTI2, SMG1 and TRRAP. Component of the mTORC1 and mTORC2 complexes. Interacts (phosphorylated form) with PIH1D1 which mediates interaction of TELO2 with the R2TP complex composed of RUVBL1, RUVBL2, PIH1D1, and RPAP3. In terms of processing, hydroxylation by PHD3 is required for a proper interaction with ATR, and activation of the ATR/CHK1/p53 pathway following DNA damage. Post-translationally, phosphorylated at Ser-485 by CK2 following growth factor deprivation, leading to its subsequent ubiquitination by the SCF(FBXO9) complex. Phosphorylation by CK2 only takes place when TELO2 is bound to mTORC1, not mTORC2; leading to selective ubiquitination of mTORC1-associated protein. Ubiquitinated by the SCF(FBXO9) complex following phosphorylation by CK2 in response to growth factor deprivation, leading to its degradation by the proteasome. Only mTORC1-associated protein is ubiquitinated and degraded, leading to selective inactivation of mTORC1 to restrain cell growth and protein translation, while mTORC2 is activated due to the relief of feedback inhibition by mTORC1.

Its subcellular location is the cytoplasm. The protein resides in the membrane. It localises to the nucleus. It is found in the chromosome. The protein localises to the telomere. Regulator of the DNA damage response (DDR). Part of the TTT complex that is required to stabilize protein levels of the phosphatidylinositol 3-kinase-related protein kinase (PIKK) family proteins. The TTT complex is involved in the cellular resistance to DNA damage stresses, like ionizing radiation (IR), ultraviolet (UV) and mitomycin C (MMC). Together with the TTT complex and HSP90 may participate in the proper folding of newly synthesized PIKKs. Promotes assembly, stabilizes and maintains the activity of mTORC1 and mTORC2 complexes, which regulate cell growth and survival in response to nutrient and hormonal signals. May be involved in telomere length regulation. The polypeptide is Telomere length regulation protein TEL2 homolog (TELO2) (Homo sapiens (Human)).